Consider the following 516-residue polypeptide: D-alanine--D-alanyl carrier protein ligase (516 aa).

156-157 lines the ATP pocket; it reads TS. D-alanine is bound at residue D203. 298–303 contacts ATP; sequence NAYGPT. V307 contributes to the D-alanine binding site. ATP-binding positions include D389, 401–404, and K503; that span reads YGGR. K503 lines the D-alanine pocket.

It belongs to the ATP-dependent AMP-binding enzyme family. DltA subfamily.

The protein resides in the cytoplasm. It catalyses the reaction holo-[D-alanyl-carrier protein] + D-alanine + ATP = D-alanyl-[D-alanyl-carrier protein] + AMP + diphosphate. It participates in cell wall biogenesis; lipoteichoic acid biosynthesis. Functionally, catalyzes the first step in the D-alanylation of lipoteichoic acid (LTA), the activation of D-alanine and its transfer onto the D-alanyl carrier protein (Dcp) DltC. In an ATP-dependent two-step reaction, forms a high energy D-alanyl-AMP intermediate, followed by transfer of the D-alanyl residue as a thiol ester to the phosphopantheinyl prosthetic group of the Dcp. D-alanylation of LTA plays an important role in modulating the properties of the cell wall in Gram-positive bacteria, influencing the net charge of the cell wall. The chain is D-alanine--D-alanyl carrier protein ligase from Streptococcus pneumoniae (strain ATCC 700669 / Spain 23F-1).